We begin with the raw amino-acid sequence, 304 residues long: DCN1-like protein 3 (304 aa).

Disordered stretches follow at residues 1-87 and 285-304; these read MGQC…EESS and VEGR…EEQT. Glycine 2 carries the N-myristoyl glycine lipid modification. In terms of domain architecture, DCUN1 spans 86–278; that stretch reads SSLQRLEELF…LFDTFVEWEM (193 aa).

Part of a complex containing DCUN1D3, CUL3 and RBX1. Interacts (via the DCUN1 domain) with the unneddylated cullins: interacts with CUL1, CUL2, CUL3, CUL4A, CUL4B and CUL5; these interactions promote the cullin neddylation and the identity of the cullin dictates the affinity of the interaction. Interacts preferentially with CUL3; this interaction triggers the relocalization of CUL3 to the cell membrane where CUL3 is neddylated. Interacts (via DCUN1 domain) with RBX1. May also interact with regulators or subunits of cullin-RING ligases such as RNF7, ELOB and DDB1; these interactions are bridged by cullins. Interacts (via DCUN1 domain) with CAND1; this interaction is bridged by cullins and strongly inhibits cullin neddylation. These CAND-cullin-DCNL complexes can only be neddylated in the presence of a substrate adapter. Interacts (via DCUN1 domain) with the N-terminally acetylated form of UBE2M and UBE2F.

The protein localises to the cell membrane. Its subcellular location is the cytoplasm. It localises to the nucleus. The protein resides in the perinuclear region. Contributes to the neddylation of all cullins by transferring NEDD8 from N-terminally acetylated NEDD8-conjugating E2s enzyme to different cullin C-terminal domain-RBX complexes and may play a role in the cell cycle progression by regulating the SCF ubiquitin E3 ligase complex, after UV damage. At the cell membrane, can promote and as well inhibit cullins neddylation. This is DCN1-like protein 3 from Rattus norvegicus (Rat).